The chain runs to 240 residues: Adenylate dimethylallyltransferase (240 aa).

The protein belongs to the isopentenyl transferase family.

The enzyme catalyses dimethylallyl diphosphate + AMP = N(6)-(dimethylallyl)adenosine 5'-phosphate + diphosphate. Its function is as follows. Transfers dimethylallyl groups to AMP as part of the biosynthesis of cytokinin phytohormones. The protein is Adenylate dimethylallyltransferase (ipt) of Agrobacterium vitis (Rhizobium vitis).